Here is a 356-residue protein sequence, read N- to C-terminus: Protein RecA (356 aa).

68 to 75 (GQESSGKT) contributes to the ATP binding site.

Belongs to the RecA family.

It localises to the cytoplasm. In terms of biological role, can catalyze the hydrolysis of ATP in the presence of single-stranded DNA, the ATP-dependent uptake of single-stranded DNA by duplex DNA, and the ATP-dependent hybridization of homologous single-stranded DNAs. It interacts with LexA causing its activation and leading to its autocatalytic cleavage. The polypeptide is Protein RecA (Thermotoga petrophila (strain ATCC BAA-488 / DSM 13995 / JCM 10881 / RKU-1)).